The following is a 104-amino-acid chain: Large ribosomal subunit protein uL24 (104 aa).

Residues 82–92 (RIGYRTDENGK) are compositionally biased toward basic and acidic residues. The interval 82–104 (RIGYRTDENGKRVRISRRNGKDI) is disordered. The segment covering 93–104 (RVRISRRNGKDI) has biased composition (basic residues).

Belongs to the universal ribosomal protein uL24 family. As to quaternary structure, part of the 50S ribosomal subunit.

In terms of biological role, one of two assembly initiator proteins, it binds directly to the 5'-end of the 23S rRNA, where it nucleates assembly of the 50S subunit. Its function is as follows. One of the proteins that surrounds the polypeptide exit tunnel on the outside of the subunit. This chain is Large ribosomal subunit protein uL24, found in Nocardia farcinica (strain IFM 10152).